The primary structure comprises 208 residues: Small ribosomal subunit protein uS4 (208 aa).

An S4 RNA-binding domain is found at 97–158 (TRLDNVIYRM…RAQKYLCVQE (62 aa)).

Belongs to the universal ribosomal protein uS4 family. In terms of assembly, part of the 30S ribosomal subunit. Contacts protein S5. The interaction surface between S4 and S5 is involved in control of translational fidelity.

Its function is as follows. One of the primary rRNA binding proteins, it binds directly to 16S rRNA where it nucleates assembly of the body of the 30S subunit. In terms of biological role, with S5 and S12 plays an important role in translational accuracy. This Xylella fastidiosa (strain 9a5c) protein is Small ribosomal subunit protein uS4.